The chain runs to 382 residues: PqqA peptide cyclase (382 aa).

In terms of domain architecture, Radical SAM core spans 8–223 (VKPPLWLLAE…VHRYREKMAA (216 aa)). Positions 22, 26, and 29 each coordinate [4Fe-4S] cluster.

It belongs to the radical SAM superfamily. PqqE family. As to quaternary structure, interacts with PqqD. The interaction is necessary for activity of PqqE. [4Fe-4S] cluster is required as a cofactor.

It catalyses the reaction [PQQ precursor protein] + S-adenosyl-L-methionine = E-Y cross-linked-[PQQ precursor protein] + 5'-deoxyadenosine + L-methionine + H(+). Its pathway is cofactor biosynthesis; pyrroloquinoline quinone biosynthesis. Its function is as follows. Catalyzes the cross-linking of a glutamate residue and a tyrosine residue in the PqqA protein as part of the biosynthesis of pyrroloquinoline quinone (PQQ). This chain is PqqA peptide cyclase, found in Erwinia tasmaniensis (strain DSM 17950 / CFBP 7177 / CIP 109463 / NCPPB 4357 / Et1/99).